Here is a 175-residue protein sequence, read N- to C-terminus: CDP-archaeol synthase (175 aa).

The next 4 membrane-spanning stretches (helical) occupy residues 41 to 61, 78 to 98, 122 to 142, and 150 to 170; these read GLFS…WLSM, YASA…GDMF, FVVG…VSNF, and VLIM…FIGV.

It belongs to the CDP-archaeol synthase family. The cofactor is Mg(2+).

The protein resides in the cell membrane. The enzyme catalyses 2,3-bis-O-(geranylgeranyl)-sn-glycerol 1-phosphate + CTP + H(+) = CDP-2,3-bis-O-(geranylgeranyl)-sn-glycerol + diphosphate. The protein operates within membrane lipid metabolism; glycerophospholipid metabolism. Catalyzes the formation of CDP-2,3-bis-(O-geranylgeranyl)-sn-glycerol (CDP-archaeol) from 2,3-bis-(O-geranylgeranyl)-sn-glycerol 1-phosphate (DGGGP) and CTP. This reaction is the third ether-bond-formation step in the biosynthesis of archaeal membrane lipids. The polypeptide is CDP-archaeol synthase (Methanosarcina acetivorans (strain ATCC 35395 / DSM 2834 / JCM 12185 / C2A)).